The sequence spans 443 residues: Sperm-associated antigen 4 protein (443 aa).

Low complexity predominate over residues 1 to 36 (MRRSPRSGSAASSHNHTPNFYSENSNSSHSATSGDS). Positions 1–107 (MRRSPRSGSA…VRGGASEPSG (107 aa)) are disordered. Helical transmembrane passes span 137–157 (FLSL…DGLV) and 168–188 (FLFT…WGLL). A coiled-coil region spans residues 203 to 244 (TLSQYHHRVHSQGQQLQQLQAELNKLHKEVSSVRAAHSERVA). Residues 267-427 (GASIDLEKTS…YRVRAHGVRT (161 aa)) form the SUN domain.

As to quaternary structure, self-associates. Interacts with ODF1. May associate with microtubules. Interacts with SUN3 and SYNE1; suggesting the formation of a spermatogenesis-specific LINC complex; a SUN domain-based heterotrimer of SPAG4 and SUN3 may associate with SYNE1. Interacts with SEPT12 and LMNB1; during spermatogenesis. Isoform 1 is testis specific and is exclusively expressed in spermatids.

It localises to the membrane. The protein resides in the cytoplasm. The protein localises to the cytoskeleton. It is found in the nucleus envelope. Its subcellular location is the nucleus inner membrane. It localises to the flagellum axoneme. In terms of biological role, involved in spermatogenesis. Required for sperm head formation but not required to establish and maintain general polarity of the sperm head. Required for anchoring and organization of the manchette. Required for targeting of SUN3 and probably SYNE1 through a probable SUN1:SYNE3 LINC complex to the nuclear envelope and involved in accurate posterior sperm head localization of the complex. May anchor SUN3 the nuclear envelope. Involved in maintenance of the nuclear envelope integrity. May assist the organization and assembly of outer dense fibers (ODFs), a specific structure of the sperm tail. This chain is Sperm-associated antigen 4 protein (Spag4), found in Mus musculus (Mouse).